Here is a 184-residue protein sequence, read N- to C-terminus: Photosystem I assembly protein Ycf4 (184 aa).

2 helical membrane-spanning segments follow: residues 22–42 (FCWA…GISS) and 57–77 (IVFF…LFIS).

It belongs to the Ycf4 family.

It is found in the plastid. The protein resides in the chloroplast thylakoid membrane. In terms of biological role, seems to be required for the assembly of the photosystem I complex. The sequence is that of Photosystem I assembly protein Ycf4 from Coffea arabica (Arabian coffee).